Reading from the N-terminus, the 147-residue chain is MAGSKSPKGLFAARKLRLKRLKFSWSQRSFKRRMLALKEKFDPLEGAPMARGIVLEKVGIESRQPNSAVRKAVRVQLVKNGRIVTAFVPGDGGVNFIDEHDEVVIAGIGGTLGRSMGDLPGVRYKVVMVNGVSLDALYKGKKQKPVR.

This sequence belongs to the universal ribosomal protein uS12 family. As to quaternary structure, part of the 30S ribosomal subunit.

With S4 and S5 plays an important role in translational accuracy. Located at the interface of the 30S and 50S subunits. This is Small ribosomal subunit protein uS12 from Sulfolobus acidocaldarius (strain ATCC 33909 / DSM 639 / JCM 8929 / NBRC 15157 / NCIMB 11770).